Consider the following 143-residue polypeptide: Nucleoside diphosphate kinase (143 aa).

6 residues coordinate ATP: Lys11, Phe59, Arg87, Thr93, Arg104, and Asn114. His117 acts as the Pros-phosphohistidine intermediate in catalysis.

This sequence belongs to the NDK family. Homotetramer. Mg(2+) is required as a cofactor.

Its subcellular location is the cytoplasm. It catalyses the reaction a 2'-deoxyribonucleoside 5'-diphosphate + ATP = a 2'-deoxyribonucleoside 5'-triphosphate + ADP. The catalysed reaction is a ribonucleoside 5'-diphosphate + ATP = a ribonucleoside 5'-triphosphate + ADP. Major role in the synthesis of nucleoside triphosphates other than ATP. The ATP gamma phosphate is transferred to the NDP beta phosphate via a ping-pong mechanism, using a phosphorylated active-site intermediate. This Shewanella sp. (strain MR-4) protein is Nucleoside diphosphate kinase.